Here is a 349-residue protein sequence, read N- to C-terminus: Phosphoribosylformylglycinamidine cyclo-ligase (349 aa).

Belongs to the AIR synthase family.

It localises to the cytoplasm. The enzyme catalyses 2-formamido-N(1)-(5-O-phospho-beta-D-ribosyl)acetamidine + ATP = 5-amino-1-(5-phospho-beta-D-ribosyl)imidazole + ADP + phosphate + H(+). It participates in purine metabolism; IMP biosynthesis via de novo pathway; 5-amino-1-(5-phospho-D-ribosyl)imidazole from N(2)-formyl-N(1)-(5-phospho-D-ribosyl)glycinamide: step 2/2. The chain is Phosphoribosylformylglycinamidine cyclo-ligase from Bordetella avium (strain 197N).